The following is a 232-amino-acid chain: Ion-translocating oxidoreductase complex subunit E (232 aa).

Helical transmembrane passes span 18–38 (GLVQ…LTNA), 39–59 (LGLG…VSLV), 69–89 (IPVF…LINA), 93–113 (GLYL…IIIG), 127–147 (AAFD…VLGA), and 182–202 (PFLL…LIAL).

Belongs to the NqrDE/RnfAE family. The complex is composed of six subunits: RnfA, RnfB, RnfC, RnfD, RnfE and RnfG.

Its subcellular location is the cell inner membrane. Its function is as follows. Part of a membrane-bound complex that couples electron transfer with translocation of ions across the membrane. The protein is Ion-translocating oxidoreductase complex subunit E of Shewanella sp. (strain ANA-3).